Here is a 1051-residue protein sequence, read N- to C-terminus: Outer capsid protein VP2 (1051 aa).

The protein belongs to the orbivirus VP2 family.

It localises to the virion. In terms of biological role, the VP2 protein is one of the two proteins (with VP5) which constitute the virus particle outer capsid. It is the major target of the host immunogenic response. In African horse sickness virus (AHSV), this protein is Outer capsid protein VP2 (Segment-2).